A 173-amino-acid chain; its full sequence is Cytochrome c homolog (173 aa).

The Cytoplasmic segment spans residues 1–8; that stretch reads MSGKELNK. The helical; Signal-anchor transmembrane segment at 9–29 threads the bilayer; sequence IVAAILFASLIAMMVGFIANI. The Periplasmic portion of the chain corresponds to 30–173; sequence LYKPVLEPKH…LFLKTYVHDK (144 aa). C82, C85, H86, and M148 together coordinate heme c.

It belongs to the cytochrome c family. In terms of processing, binds 1 heme c group covalently per subunit.

It localises to the cell membrane. Its function is as follows. May be involved in electron transfer from bc1 complex to aa3. The protein is Cytochrome c homolog (cycM) of Rickettsia bellii (strain RML369-C).